A 238-amino-acid polypeptide reads, in one-letter code: Probable 2-phosphosulfolactate phosphatase (238 aa).

Belongs to the ComB family. It depends on Mg(2+) as a cofactor.

It catalyses the reaction (2R)-O-phospho-3-sulfolactate + H2O = (2R)-3-sulfolactate + phosphate. This Clostridium botulinum (strain Eklund 17B / Type B) protein is Probable 2-phosphosulfolactate phosphatase.